A 466-amino-acid polypeptide reads, in one-letter code: tRNA(Ile)-lysidine synthase (466 aa).

26-31 (SGGSDS) lines the ATP pocket.

It belongs to the tRNA(Ile)-lysidine synthase family.

Its subcellular location is the cytoplasm. It catalyses the reaction cytidine(34) in tRNA(Ile2) + L-lysine + ATP = lysidine(34) in tRNA(Ile2) + AMP + diphosphate + H(+). Functionally, ligates lysine onto the cytidine present at position 34 of the AUA codon-specific tRNA(Ile) that contains the anticodon CAU, in an ATP-dependent manner. Cytidine is converted to lysidine, thus changing the amino acid specificity of the tRNA from methionine to isoleucine. This Oceanobacillus iheyensis (strain DSM 14371 / CIP 107618 / JCM 11309 / KCTC 3954 / HTE831) protein is tRNA(Ile)-lysidine synthase.